Consider the following 300-residue polypeptide: GTP-binding protein At2g22870 (300 aa).

In terms of domain architecture, EngB-type G spans 119–297; sequence DRPEIAILGR…LLHMSQLRNY (179 aa). Residues 127 to 134, 154 to 158, 172 to 175, 239 to 242, and 276 to 278 each bind GTP; these read GRSNVGKS, GKTQL, DLPG, TKCD, and TSS. Mg(2+)-binding residues include Ser134 and Thr156.

The protein belongs to the TRAFAC class TrmE-Era-EngA-EngB-Septin-like GTPase superfamily. EngB GTPase family. Mg(2+) serves as cofactor.

This Arabidopsis thaliana (Mouse-ear cress) protein is GTP-binding protein At2g22870 (EMB2001).